Consider the following 750-residue polypeptide: MIIRSPEPEVKILVDRDPIKTSFEDWARPGHFSRTIAKGPDTTTWIWNLHADAHDFDSHTSDLEEISRKVFSAHFGQLSIIFLWLSGMYFHGARFSNYEAWLGDPTHIGPSAQVVWPIVGQEILNGDVGGGFRGIQITSGFFQMWRASGITNELQLYCTAIGALVFAALMLFAGWFHYHKAAPKLAWFQDVESMLNHHLAGLLGLGSLSWAGHQVHVSLPINQFLNAGVDPKEIPLPHEFILNRDLLAQLYPSFAEGATPFFTLNWSKYAEFLTFRGGLDPVTGGLWLTDIAHHHLAIAILFLIAGHMYRTNWGIGHGIKDILEAHKGPFTGQGHKGLYEILTTSWHAQLSINLAMLGSLTIIVAHHMYAMPPYPYLATDYGTQLSLFTHHMWIGGFLIVGAAAHAAIFMVRDYDPTTRYNDLLDRVLRHRDAIISHLNWVCIFLGFHSFGLYIHNDTMSALGRPQDMFSDTAIQLQPVFAQWIQNTHALAPRITAPGATTGTSLTWGGGDLVAVGGKVALLPIPLGTADFLVHHIHAFTIHVTVLILLKGVLFSRSSRLIPDKANLGFRFPCDGPGRGGTCQVSAWDHVFLGLFWMYNSISVVIFHFSWKMQSDVWGSVSDQGVVTHITGGNFAQSSITINGWLRDFLWAQASQVIQSYGSSLSAYGLFFLGAHFVWAFSLMFLFSGRGYWQELIESIVWAHNKLKVAPATQPRALSIVQGRAVGVTHYLLGGIATTWAFFLARIIAVG.

8 helical membrane-spanning segments follow: residues 70-93 (VFSA…FHGA), 156-179 (LYCT…FHYH), 195-219 (LNHH…HVSL), 291-309 (IAHH…GHMY), 346-369 (WHAQ…HHMY), 385-411 (LSLF…IFMV), 433-455 (AIIS…LYIH), and 531-549 (FLVH…LILL). Residues Cys573 and Cys582 each coordinate [4Fe-4S] cluster. The next 2 membrane-spanning stretches (helical) occupy residues 589 to 610 (HVFL…HFSW) and 664 to 686 (LSAY…MFLF). Residue His675 participates in chlorophyll a' binding. Chlorophyll a contacts are provided by Met683 and Tyr691. Phylloquinone is bound at residue Trp692. The helical transmembrane segment at 724 to 744 (AVGVTHYLLGGIATTWAFFLA) threads the bilayer.

The protein belongs to the PsaA/PsaB family. In terms of assembly, the PsaA/B heterodimer binds the P700 chlorophyll special pair and subsequent electron acceptors. PSI consists of a core antenna complex that captures photons, and an electron transfer chain that converts photonic excitation into a charge separation. The eukaryotic PSI reaction center is composed of at least 11 subunits. Requires P700 is a chlorophyll a/chlorophyll a' dimer, A0 is one or more chlorophyll a, A1 is one or both phylloquinones and FX is a shared 4Fe-4S iron-sulfur center. as cofactor.

It localises to the plastid. The protein resides in the chloroplast thylakoid membrane. The enzyme catalyses reduced [plastocyanin] + hnu + oxidized [2Fe-2S]-[ferredoxin] = oxidized [plastocyanin] + reduced [2Fe-2S]-[ferredoxin]. PsaA and PsaB bind P700, the primary electron donor of photosystem I (PSI), as well as the electron acceptors A0, A1 and FX. PSI is a plastocyanin-ferredoxin oxidoreductase, converting photonic excitation into a charge separation, which transfers an electron from the donor P700 chlorophyll pair to the spectroscopically characterized acceptors A0, A1, FX, FA and FB in turn. Oxidized P700 is reduced on the lumenal side of the thylakoid membrane by plastocyanin. This chain is Photosystem I P700 chlorophyll a apoprotein A1, found in Cucumis sativus (Cucumber).